A 571-amino-acid chain; its full sequence is Arginine--tRNA ligase (571 aa).

The 'HIGH' region motif lies at 122 to 132; the sequence is PNIAKEMHVGH.

The protein belongs to the class-I aminoacyl-tRNA synthetase family. Monomer.

Its subcellular location is the cytoplasm. The enzyme catalyses tRNA(Arg) + L-arginine + ATP = L-arginyl-tRNA(Arg) + AMP + diphosphate. The polypeptide is Arginine--tRNA ligase (Buchnera aphidicola subsp. Cinara cedri (strain Cc)).